A 423-amino-acid chain; its full sequence is GTPase ERA-like, chloroplastic (423 aa).

A chloroplast-targeting transit peptide spans 1 to 60 (MELGLALRLVAPPPRLPCRALQPPPMPCFSPCAARRSRIRSSRLERRVGVVVSGGSMASL). The Era-type G domain maps to 124–294 (RSGYVAVLGK…KEWILSKLPL (171 aa)). Residues 132–139 (GKPNVGKS) form a G1 region. GTP is bound at residue 132 to 139 (GKPNVGKS). The segment at 158-162 (QTTRH) is G2. Residues 179-182 (DTPG) are G3. Residues 179-183 (DTPGV) and 244-247 (NKKD) contribute to the GTP site. The segment at 244 to 247 (NKKD) is G4. The interval 273–275 (ISA) is G5. In terms of domain architecture, KH type-2 spans 325 to 402 (YRQEIPYACQ…YLEIMVKVKE (78 aa)).

The protein belongs to the TRAFAC class TrmE-Era-EngA-EngB-Septin-like GTPase superfamily. Era GTPase family.

The protein localises to the plastid. The protein resides in the chloroplast stroma. It localises to the chloroplast nucleoid. In terms of biological role, nuclear genome-encoded probable GTPase involved in ribosome biogenesis in chloroplasts. Plays a role in 16S rRNA maturation in plastids and may contribute to the assembly of the small (30S) ribosomal subunit. This is GTPase ERA-like, chloroplastic from Oryza sativa subsp. japonica (Rice).